A 162-amino-acid chain; its full sequence is Endoribonuclease YbeY (162 aa).

3 residues coordinate Zn(2+): His128, His132, and His138.

The protein belongs to the endoribonuclease YbeY family. Requires Zn(2+) as cofactor.

The protein resides in the cytoplasm. Its function is as follows. Single strand-specific metallo-endoribonuclease involved in late-stage 70S ribosome quality control and in maturation of the 3' terminus of the 16S rRNA. This Lactococcus lactis subsp. cremoris (strain MG1363) protein is Endoribonuclease YbeY.